The chain runs to 180 residues: MANRLKEKYTNEVIPALTEKFNYTSVMAVPKVEKIVLNMGVGDAVSNAKNLEKAAAELALISGQKPLITKAKKSIAGFRLREGVAIGAKVTLRGERMYEFLDKLVSVSLPRVRDFHGVPTKSFDGRGNYTLGVKEQLIFPEISFDDVDKVRGLDIVIVTTANTDEESRELLKALGMPFAK.

Belongs to the universal ribosomal protein uL5 family. Part of the 50S ribosomal subunit; part of the 5S rRNA/L5/L18/L25 subcomplex. Contacts the 5S rRNA and the P site tRNA. Forms a bridge to the 30S subunit in the 70S ribosome.

In terms of biological role, this is one of the proteins that bind and probably mediate the attachment of the 5S RNA into the large ribosomal subunit, where it forms part of the central protuberance. In the 70S ribosome it contacts protein S13 of the 30S subunit (bridge B1b), connecting the 2 subunits; this bridge is implicated in subunit movement. Contacts the P site tRNA; the 5S rRNA and some of its associated proteins might help stabilize positioning of ribosome-bound tRNAs. This Streptococcus pyogenes serotype M49 (strain NZ131) protein is Large ribosomal subunit protein uL5.